Consider the following 262-residue polypeptide: Glycoprotein gp2 (262 aa).

Residues 1–45 are disordered; the sequence is RRGSPQGGSHTTPHPDRLTPSPDDTYDDDTNHPNGRNNSIEIVPQ.

It localises to the virion membrane. Functionally, virulence factor. The protein is Glycoprotein gp2 of Equus caballus (Horse).